The following is a 439-amino-acid chain: tRNA modification GTPase MnmE (439 aa).

(6S)-5-formyl-5,6,7,8-tetrahydrofolate is bound by residues arginine 20, glutamate 78, and lysine 116. A TrmE-type G domain is found at 211 to 364; it reads GIYVAILGEP…LLSAIQKKVE (154 aa). GTP is bound by residues 221 to 226, 240 to 246, and 265 to 268; these read NSGKST, SEYAGTT, and DTAG. Mg(2+)-binding residues include serine 225 and threonine 246. Lysine 439 provides a ligand contact to (6S)-5-formyl-5,6,7,8-tetrahydrofolate.

It belongs to the TRAFAC class TrmE-Era-EngA-EngB-Septin-like GTPase superfamily. TrmE GTPase family. Homodimer. Heterotetramer of two MnmE and two MnmG subunits. K(+) serves as cofactor.

It localises to the cytoplasm. Its function is as follows. Exhibits a very high intrinsic GTPase hydrolysis rate. Involved in the addition of a carboxymethylaminomethyl (cmnm) group at the wobble position (U34) of certain tRNAs, forming tRNA-cmnm(5)s(2)U34. This Ehrlichia ruminantium (strain Gardel) protein is tRNA modification GTPase MnmE.